The sequence spans 151 residues: Cysteine proteinase inhibitor 10 (151 aa).

An N-terminal signal peptide occupies residues 1-22; that stretch reads MATSPMLFLVSLLLVLVAAATG. A Cystatin domain is found at 40–109; sequence GGRTEIRDVG…GVAYYLKVAA (70 aa). The short motif at 96–100 is the Secondary area of contact element; sequence QVVSG.

Belongs to the cystatin family. Phytocystatin subfamily.

It is found in the secreted. Functionally, specific inhibitor of cysteine proteinases. Probably involved in the regulation of endogenous processes and in defense against pests and pathogens. In Oryza sativa subsp. indica (Rice), this protein is Cysteine proteinase inhibitor 10.